The sequence spans 224 residues: C-&gt;U-editing enzyme APOBEC-2 (224 aa).

The segment at 1 to 24 (MAQKEEAAVATEAASQNGEDLENL) is disordered. Glu60 and His98 together coordinate Zn(2+). Residues 64–169 (GRNKTFLCYV…PEIQAALKKL (106 aa)) enclose the CMP/dCMP-type deaminase domain. Glu100 serves as the catalytic Proton donor. Positions 128 and 131 each coordinate Zn(2+).

This sequence belongs to the cytidine and deoxycytidylate deaminase family. In terms of assembly, homotetramer. Zn(2+) is required as a cofactor. Expressed exclusively in heart and skeletal muscle.

The catalysed reaction is cytidine(6666) in apoB mRNA + H2O + H(+) = uridine(6666) in apoB mRNA + NH4(+). Probable C to U editing enzyme whose physiological substrate is not yet known. Does not display detectable apoB mRNA editing. Has a low intrinsic cytidine deaminase activity. May play a role in the epigenetic regulation of gene expression through the process of active DNA demethylation. This chain is C-&gt;U-editing enzyme APOBEC-2 (APOBEC2), found in Homo sapiens (Human).